We begin with the raw amino-acid sequence, 449 residues long: GTPase Der (449 aa).

2 EngA-type G domains span residues 2 to 169 and 180 to 355; these read FTVA…QLPP and VRFC…EQLT. GTP-binding positions include 8 to 15, 55 to 59, 118 to 121, 186 to 193, 233 to 237, and 298 to 301; these read GRPNVGKS, DTGGL, NKSE, GKPNVGKS, DTAGI, and NKWD. One can recognise a KH-like domain in the interval 356 to 440; it reads KKISTSLLND…PITLYFKSKN (85 aa).

The protein belongs to the TRAFAC class TrmE-Era-EngA-EngB-Septin-like GTPase superfamily. EngA (Der) GTPase family. Associates with the 50S ribosomal subunit.

GTPase that plays an essential role in the late steps of ribosome biogenesis. This Mycoplasma pneumoniae (strain ATCC 29342 / M129 / Subtype 1) (Mycoplasmoides pneumoniae) protein is GTPase Der.